The following is a 1001-amino-acid chain: Open rectifier potassium channel protein 1 (1001 aa).

Over 1-6 the chain is Cytoplasmic; sequence MSPNRW. The chain crosses the membrane as a helical span at residues 7–27; that stretch reads ILLLIFYISYLMFGAAIYYHI. N-linked (GlcNAc...) asparagine glycosylation is present at asparagine 58. Positions 95–111 form an intramembrane region, pore-forming; sequence AFFFAFTVCSTVGYGNI. Residues 120–140 traverse the membrane as a helical segment; sequence MIMIAYSVIGIPVNGILFAGL. The Cytoplasmic segment spans residues 141–170; that stretch reads GEYFGRTFEAIYRRYKKYKMSTDMHYVPPQ. Residues 171-191 traverse the membrane as a helical segment; that stretch reads LGLITTVVIALIPGIALFLLL. The segment at residues 208-224 is an intramembrane region (pore-forming); sequence LYYSYVTTTTIGFGDYV. The helical transmembrane segment at 244-264 threads the bilayer; the sequence is IFVIVWFIFSLGYLVMIMTFI. The Cytoplasmic segment spans residues 265 to 1001; the sequence is TRGLQSKKLA…TGSSGAPAEK (737 aa). Residues serine 332, serine 373, serine 562, and serine 565 each carry the phosphoserine modification. The interval 591–668 is disordered; it reads SQSYLRNGRG…QAPSARRGSM (78 aa). Phosphoserine occurs at positions 685, 691, and 715. Disordered regions lie at residues 768-795 and 830-1001; these read GGAA…EPPQ and SPTG…PAEK. Positions 832–841 are enriched in low complexity; the sequence is TGGAATAPAA. Over residues 855–873 the composition is skewed to polar residues; that stretch reads AANQSQITAGPSNAPTVQS. A compositionally biased stretch (low complexity) spans 911–926; sequence RRLSLRPSPLARELSP. The span at 961–983 shows a compositional bias: polar residues; sequence RPSTSSTHSPLSRIVQISQAQRK. Positions 984–1001 are enriched in low complexity; that stretch reads SSMPSAAATGSSGAPAEK.

The protein belongs to the two pore domain potassium channel (TC 1.A.1.8) family. In terms of tissue distribution, widespread expression in adult, strongest expression in muscle, brain and ovary. Also present at low levels in larva and embryo.

The protein resides in the membrane. Background potassium channel. Rectification is dependent on external potassium concentration. Acts as an outwardly rectifying channel but as external potassium levels increase, this is reversed. This is Open rectifier potassium channel protein 1 (Ork1) from Drosophila melanogaster (Fruit fly).